We begin with the raw amino-acid sequence, 100 residues long: NADH-quinone oxidoreductase subunit K (100 aa).

3 helical membrane-spanning segments follow: residues 4-24 (LQHG…GLLI), 28-48 (LLFM…AFVV), and 60-80 (VMYI…LALL).

Belongs to the complex I subunit 4L family. In terms of assembly, NDH-1 is composed of 13 different subunits. Subunits NuoA, H, J, K, L, M, N constitute the membrane sector of the complex.

The protein resides in the cell inner membrane. It carries out the reaction a quinone + NADH + 5 H(+)(in) = a quinol + NAD(+) + 4 H(+)(out). NDH-1 shuttles electrons from NADH, via FMN and iron-sulfur (Fe-S) centers, to quinones in the respiratory chain. The immediate electron acceptor for the enzyme in this species is believed to be ubiquinone. Couples the redox reaction to proton translocation (for every two electrons transferred, four hydrogen ions are translocated across the cytoplasmic membrane), and thus conserves the redox energy in a proton gradient. The protein is NADH-quinone oxidoreductase subunit K of Yersinia pseudotuberculosis serotype O:1b (strain IP 31758).